Reading from the N-terminus, the 332-residue chain is MLMTRPNLKGRSFLAEKDFTPEELLYFLDLAAELKEKKKNGIPHHYLEGKNVALLFEKTSTRTRCAFTVACTDLGANPEYLGKGDIQLGKKESVEDTAKVLGRMFDGIEFRGFNHETVESLAQNSGVPVWNGLTDMWHPTQTLADLLTIREHVGKLKNVKLVYVGDGRNNVANSLLVGGAIVGMDVRICTPESLWPAQEVIDLAKKYNEQVMITSNVEEAVASADVIYTDVWVSMGEEEKFAERVELLKPYQVNMKMIKETGNKNVIFLHCLPAFHDVETMYGEEVYEKYGLKEMEVTDEVFRSKHSKVFDQAENRMHTIKAVMAATLGNME.

Carbamoyl phosphate-binding positions include 60–63, Gln-87, Arg-111, and 138–141; these read STRT and HPTQ. L-ornithine-binding positions include Asn-170, Asp-230, and 234–235; that span reads SM. Carbamoyl phosphate contacts are provided by residues 271–272 and Arg-316; that span reads CL.

The protein belongs to the aspartate/ornithine carbamoyltransferase superfamily. OTCase family.

The protein localises to the cytoplasm. It carries out the reaction carbamoyl phosphate + L-ornithine = L-citrulline + phosphate + H(+). Its pathway is amino-acid degradation; L-arginine degradation via ADI pathway; carbamoyl phosphate from L-arginine: step 2/2. In terms of biological role, reversibly catalyzes the transfer of the carbamoyl group from carbamoyl phosphate (CP) to the N(epsilon) atom of ornithine (ORN) to produce L-citrulline. This Bacillus thuringiensis subsp. konkukian (strain 97-27) protein is Ornithine carbamoyltransferase, catabolic.